The chain runs to 129 residues: Large ribosomal subunit protein bL12 (129 aa).

Belongs to the bacterial ribosomal protein bL12 family. Homodimer. Part of the ribosomal stalk of the 50S ribosomal subunit. Forms a multimeric L10(L12)X complex, where L10 forms an elongated spine to which 2 to 4 L12 dimers bind in a sequential fashion. Binds GTP-bound translation factors.

In terms of biological role, forms part of the ribosomal stalk which helps the ribosome interact with GTP-bound translation factors. Is thus essential for accurate translation. This Treponema denticola (strain ATCC 35405 / DSM 14222 / CIP 103919 / JCM 8153 / KCTC 15104) protein is Large ribosomal subunit protein bL12.